The sequence spans 663 residues: MAU2 chromatid cohesion factor homolog (663 aa).

2 TPR repeats span residues 455 to 488 (GGFY…ANAE) and 495 to 528 (SCSL…ASKI).

The protein belongs to the SCC4/mau-2 family. As to quaternary structure, interacts with Nipped-B to form the cohesin loading complex.

It is found in the nucleus. Its subcellular location is the nucleoplasm. Functionally, required for association of the cohesin complex with chromatin during interphase. Plays a role in sister chromatid cohesion and normal progression through prometaphase. This is MAU2 chromatid cohesion factor homolog from Drosophila willistoni (Fruit fly).